Here is a 79-residue protein sequence, read N- to C-terminus: Conotoxin Vi6.9 (79 aa).

The first 22 residues, 1–22 (MKLTCMVIITVLFLTASQLITA), serve as a signal peptide directing secretion. The propeptide occupies 23–47 (DYSRDQRQYRAVRLGDEMRNFKGAR). 3 disulfides stabilise this stretch: cysteine 49–cysteine 62, cysteine 56–cysteine 67, and cysteine 61–cysteine 77. 2 positions are modified to 4-hydroxyproline: proline 60 and proline 63.

It belongs to the conotoxin O1 superfamily. As to expression, expressed by the venom duct.

Its subcellular location is the secreted. Ion channel inhibitor that inhibits the increase in intracellular calcium upon depolarization in DRG neurons. In vivo, both intraperitoneal and intracranial injections into mice induce hyperactivity. This Conus virgo (Virgin cone) protein is Conotoxin Vi6.9.